The sequence spans 322 residues: DNA repair and recombination protein RadA (322 aa).

105 to 112 (GMFGSGKT) serves as a coordination point for ATP.

The protein belongs to the eukaryotic RecA-like protein family.

Involved in DNA repair and in homologous recombination. Binds and assemble on single-stranded DNA to form a nucleoprotein filament. Hydrolyzes ATP in a ssDNA-dependent manner and promotes DNA strand exchange between homologous DNA molecules. This Methanococcus maripaludis (Methanococcus deltae) protein is DNA repair and recombination protein RadA.